Here is a 574-residue protein sequence, read N- to C-terminus: Choline transporter-like protein ctl1 (574 aa).

N-linked (GlcNAc...) asparagine glycosylation is found at Asn-40 and Asn-101. A run of 8 helical transmembrane segments spans residues 144–164 (WGLTFGFLTLALFTYSFLMVW), 189–209 (KDAIICMMLSVIWLFCLVAIP), 211–231 (FLYFLLASVPLTMFAFAVYLL), 246–266 (LMLLTGIILLVAPILLSYYVW), 291–311 (QITLIFISFLFSFYVLIFIWV), 336–356 (WVLASFYSLHFLWLCTFFHAL), 396–416 (YGLCAFSSFLVVITKVPLHFL), and 434–456 (TSASYVTSPLTLAYASIYSVPYM). Asn-457 is a glycosylation site (N-linked (GlcNAc...) asparagine). Helical transmembrane passes span 485 to 505 (LLAARSLLAIGVGVTSWNYSI) and 511 to 531 (FYGYIVGLLGGFLAWLIIGAI). N-linked (GlcNAc...) asparagine glycosylation is present at Asn-558.

Belongs to the CTL (choline transporter-like) family. In terms of assembly, interacts with atg9.

It is found in the endoplasmic reticulum membrane. Its subcellular location is the preautophagosomal structure membrane. In terms of biological role, required for the normal organization of the preautophagosomal structure (PAS) and for the correct subcellular location of atg9. This chain is Choline transporter-like protein ctl1 (ctl1), found in Schizosaccharomyces pombe (strain 972 / ATCC 24843) (Fission yeast).